The following is a 243-amino-acid chain: 6-carboxyhexanoate--CoA ligase (243 aa).

Belongs to the BioW family. As to quaternary structure, homodimer. Requires Mg(2+) as cofactor.

It catalyses the reaction heptanedioate + ATP + CoA = 6-carboxyhexanoyl-CoA + AMP + diphosphate. It functions in the pathway metabolic intermediate metabolism; pimeloyl-CoA biosynthesis; pimeloyl-CoA from pimelate: step 1/1. Functionally, catalyzes the transformation of pimelate into pimeloyl-CoA with concomitant hydrolysis of ATP to AMP. The protein is 6-carboxyhexanoate--CoA ligase of Corynebacterium pseudotuberculosis (strain FRC41).